The following is a 320-amino-acid chain: Acetyl-coenzyme A carboxylase carboxyl transferase subunit alpha (320 aa).

A CoA carboxyltransferase C-terminal domain is found at 33 to 294 (AFDTEIQALR…GDAVEDELKA (262 aa)).

The protein belongs to the AccA family. As to quaternary structure, acetyl-CoA carboxylase is a heterohexamer composed of biotin carboxyl carrier protein (AccB), biotin carboxylase (AccC) and two subunits each of ACCase subunit alpha (AccA) and ACCase subunit beta (AccD).

The protein localises to the cytoplasm. The enzyme catalyses N(6)-carboxybiotinyl-L-lysyl-[protein] + acetyl-CoA = N(6)-biotinyl-L-lysyl-[protein] + malonyl-CoA. The protein operates within lipid metabolism; malonyl-CoA biosynthesis; malonyl-CoA from acetyl-CoA: step 1/1. Component of the acetyl coenzyme A carboxylase (ACC) complex. First, biotin carboxylase catalyzes the carboxylation of biotin on its carrier protein (BCCP) and then the CO(2) group is transferred by the carboxyltransferase to acetyl-CoA to form malonyl-CoA. In Caulobacter vibrioides (strain ATCC 19089 / CIP 103742 / CB 15) (Caulobacter crescentus), this protein is Acetyl-coenzyme A carboxylase carboxyl transferase subunit alpha.